Consider the following 947-residue polypeptide: ATPase 10, plasma membrane-type (947 aa).

At 1–69 (MAEDLDKPLL…EKQENRFVKF (69 aa)) the chain is on the cytoplasmic side. The helical transmembrane segment at 70-89 (LGFMWNPLSWVMEAAALMAI) threads the bilayer. The Extracellular portion of the chain corresponds to 90–101 (ALANSQSLGPDW). Residues 102–122 (EDFTGIVCLLLINATISFFEE) traverse the membrane as a helical segment. Topologically, residues 123 to 251 (NNAGNAAAAL…GHFQQVLTSI (129 aa)) are cytoplasmic. A helical membrane pass occupies residues 252 to 272 (GNFCICSIAVGMVLEIIIMFP). At 273 to 281 (VQHRSYRIG) the chain is on the extracellular side. Residues 282-299 (INNLLVLLIGGIPIAMPT) traverse the membrane as a helical segment. Residues 300-650 (VLSVTLAIGS…TSRAIFQRMR (351 aa)) lie on the Cytoplasmic side of the membrane. The 4-aspartylphosphate intermediate role is filled by D337. Residues D595 and D599 each coordinate Mg(2+). A helical transmembrane segment spans residues 651-672 (NYTVYAVSITIRIVLGFTLLAL). Over 673 to 677 (IWEYD) the chain is Extracellular. Residues 678 to 700 (FPPFMVLIIAILNDGTIMTISKD) traverse the membrane as a helical segment. At 701-716 (RVRPSPTPESWKLNQI) the chain is on the cytoplasmic side. The chain crosses the membrane as a helical span at residues 717–737 (FATGIVIGTYLALVTVLFYWI). The Extracellular portion of the chain corresponds to 738–758 (IVSTTFFEKHFHVKSIANNSE). A helical membrane pass occupies residues 759–779 (QVSSAMYLQVSIISQALIFVT). Topologically, residues 780–791 (RSRGWSFFERPG) are cytoplasmic. Residues 792 to 812 (TLLIFAFILAQLAATLIAVYA) form a helical membrane-spanning segment. Residues 813-820 (NISFAKIT) lie on the Extracellular side of the membrane. A helical membrane pass occupies residues 821–841 (GIGWRWAGVIWLYSLIFYIPL). The Cytoplasmic portion of the chain corresponds to 842-947 (DVIKFVFHYA…QRMIRAAHTV (106 aa)). Phosphoserine is present on residues S897 and S929. The residue at position 946 (T946) is a Phosphothreonine.

This sequence belongs to the cation transport ATPase (P-type) (TC 3.A.3) family. Type IIIA subfamily. Found primarily in developing seeds. Expressed in guard cells, mesophyll cells, leaves and roots.

The protein localises to the membrane. The catalysed reaction is ATP + H2O + H(+)(in) = ADP + phosphate + 2 H(+)(out). Its function is as follows. The plasma membrane H(+) ATPase of plants and fungi generates a proton gradient that drives the active transport of nutrients by H(+)-symport. The resulting external acidification and/or internal alkinization may mediate growth responses. This chain is ATPase 10, plasma membrane-type (AHA10), found in Arabidopsis thaliana (Mouse-ear cress).